Reading from the N-terminus, the 368-residue chain is 2-aminoethylphosphonate--pyruvate transaminase (368 aa).

Lys192 carries the post-translational modification N6-(pyridoxal phosphate)lysine.

Belongs to the class-V pyridoxal-phosphate-dependent aminotransferase family. PhnW subfamily. Homodimer. Pyridoxal 5'-phosphate serves as cofactor.

It carries out the reaction (2-aminoethyl)phosphonate + pyruvate = phosphonoacetaldehyde + L-alanine. Functionally, involved in phosphonate degradation. The protein is 2-aminoethylphosphonate--pyruvate transaminase of Pseudomonas putida (strain ATCC 47054 / DSM 6125 / CFBP 8728 / NCIMB 11950 / KT2440).